The chain runs to 602 residues: GTP-binding protein 2 (602 aa).

A disordered region spans residues 18 to 64 (GPAMGGNLKARGAGGSSSCGGPKGKKKNGRNRGGKANNPPYLPPEAE). Residues 29–39 (GAGGSSSCGGP) are compositionally biased toward gly residues. The span at 40–50 (KGKKKNGRNRG) shows a compositional bias: basic residues. In terms of domain architecture, tr-type G spans 170-398 (FLDLRVAVLG…LNILPPLTNS (229 aa)). GTP is bound by residues 179–186 (GNVDSGKS), 260–264 (DLAGH), and 316–319 (SKVD).

Belongs to the TRAFAC class translation factor GTPase superfamily. Classic translation factor GTPase family. GTPBP1 subfamily. As to expression, predominantly expressed in thymus, spleen, and testis. Expressed at lower levels in brain, heart, lung, kidney, and skeletal muscle. In testis, specifically expressed in spermatocytes and round spermatids.

The sequence is that of GTP-binding protein 2 from Mus musculus (Mouse).